The following is a 284-amino-acid chain: Shikimate dehydrogenase (NADP(+)) (284 aa).

Residues S19 to S21 and T66 each bind shikimate. Residue K70 is the Proton acceptor of the active site. D82 is a binding site for NADP(+). N91 and D106 together coordinate shikimate. NADP(+) contacts are provided by residues G130–S134 and I226. Y228 contributes to the shikimate binding site. G249 lines the NADP(+) pocket.

Belongs to the shikimate dehydrogenase family. As to quaternary structure, homodimer.

It carries out the reaction shikimate + NADP(+) = 3-dehydroshikimate + NADPH + H(+). It participates in metabolic intermediate biosynthesis; chorismate biosynthesis; chorismate from D-erythrose 4-phosphate and phosphoenolpyruvate: step 4/7. Involved in the biosynthesis of the chorismate, which leads to the biosynthesis of aromatic amino acids. Catalyzes the reversible NADPH linked reduction of 3-dehydroshikimate (DHSA) to yield shikimate (SA). This chain is Shikimate dehydrogenase (NADP(+)), found in Methanococcus vannielii (strain ATCC 35089 / DSM 1224 / JCM 13029 / OCM 148 / SB).